We begin with the raw amino-acid sequence, 313 residues long: Expansin-like A4 (313 aa).

The signal sequence occupies residues 1–30; that stretch reads MDDNGDVHFCHRATAVVALLLLHLVVVANA. The region spanning 59–173 is the Expansin-like EG45 domain; it reads GGACGFGAAP…RRIPCEYRES (115 aa). Residue N124 is glycosylated (N-linked (GlcNAc...) asparagine). The region spanning 188-281 is the Expansin-like CBD domain; sequence THLAIRFLYQ…DWRPGEVYDT (94 aa).

Belongs to the expansin family. Expansin-like A subfamily.

It localises to the secreted. This is Expansin-like A4 (EXLA4) from Oryza sativa subsp. japonica (Rice).